Reading from the N-terminus, the 216-residue chain is Protein OPG164 (216 aa).

Position 1 (M1) is a topological domain, extracellular. Residues 2-22 form a helical membrane-spanning segment; the sequence is ILVPLITVTVVAGTILVCYIL. The Cytoplasmic segment spans residues 23–216; it reads YICRKKIRTV…DIESSVVSLV (194 aa). 2 positions are modified to phosphotyrosine; by host: Y112 and Y132. 3 short sequence motifs (NPF-motif) span residues 160–162, 175–177, and 189–191; these read NPF.

This sequence belongs to the orthopoxvirus OPG164 protein family. In terms of assembly, interacts with host NCK. Interacts with protein OPG161 (via C-terminus). Interacts with protein OPG056. Interacts (via C-terminus) with host kinesin light chain/KLC1. Interacts with host intersectin-1/ITSN1 and EPS15. Post-translationally, phosphorylated on Tyr-112 and Tyr-132. Phosphorylations activate the host ARP2-ARP3 complex and lead to actin nucleation.

Its subcellular location is the host cell membrane. In terms of biological role, involved in the intracellular transport and egress of virions to the host cell surface with help of protein OPG056. Also participates in the formation of actin tails at the plasma membrane to allow efficient actin-based motility and thus cell to cell transmission of viral particles. Recruits host intersectin-1/ITSN1 and activates host CDC42 to drive ARP2/3-mediated actin polymerization. The sequence is that of Protein OPG164 (OPG164) from Variola virus (isolate Human/India/Ind3/1967) (VARV).